The primary structure comprises 188 residues: Ribosome-recycling factor (188 aa).

This sequence belongs to the RRF family.

Its subcellular location is the cytoplasm. In terms of biological role, responsible for the release of ribosomes from messenger RNA at the termination of protein biosynthesis. May increase the efficiency of translation by recycling ribosomes from one round of translation to another. In Blochmanniella pennsylvanica (strain BPEN), this protein is Ribosome-recycling factor.